We begin with the raw amino-acid sequence, 607 residues long: Sulfite reductase [NADPH] flavoprotein alpha-component (607 aa).

Residues 66–204 form the Flavodoxin-like domain; the sequence is VTILYGSQTG…AAGQWHADVL (139 aa). Residues 72–77, 119–122, and 155–164 contribute to the FMN site; these read SQTGNG, STHG, and LGDSSYEFFC. The region spanning 239–456 is the FAD-binding FR-type domain; the sequence is QNPYRAEVLV…VEPNKHFRLP (218 aa). FAD-binding positions include Thr-327, Leu-361, 395–398, 413–415, and 428–431; these read RLYS, TVA, and GGAS. Residues 527 to 528, 533 to 537, and Asp-569 contribute to the NADP(+) site; these read SR and KIYVQ. Tyr-607 contacts FAD.

Belongs to the NADPH-dependent sulphite reductase flavoprotein subunit CysJ family. It in the N-terminal section; belongs to the flavodoxin family. This sequence in the C-terminal section; belongs to the flavoprotein pyridine nucleotide cytochrome reductase family. As to quaternary structure, alpha(8)-beta(8). The alpha component is a flavoprotein, the beta component is a hemoprotein. Requires FAD as cofactor. It depends on FMN as a cofactor.

The enzyme catalyses hydrogen sulfide + 3 NADP(+) + 3 H2O = sulfite + 3 NADPH + 4 H(+). It participates in sulfur metabolism; hydrogen sulfide biosynthesis; hydrogen sulfide from sulfite (NADPH route): step 1/1. Component of the sulfite reductase complex that catalyzes the 6-electron reduction of sulfite to sulfide. This is one of several activities required for the biosynthesis of L-cysteine from sulfate. The flavoprotein component catalyzes the electron flow from NADPH -&gt; FAD -&gt; FMN to the hemoprotein component. The chain is Sulfite reductase [NADPH] flavoprotein alpha-component from Shewanella oneidensis (strain ATCC 700550 / JCM 31522 / CIP 106686 / LMG 19005 / NCIMB 14063 / MR-1).